A 691-amino-acid chain; its full sequence is Dipeptidyl peptidase 3 (691 aa).

His-431 serves as a coordination point for Zn(2+). The active site involves Glu-432. Residues His-436 and Glu-492 each coordinate Zn(2+).

The protein belongs to the peptidase M49 family. The cofactor is Zn(2+).

The protein localises to the cytoplasm. The enzyme catalyses Release of an N-terminal dipeptide from a peptide comprising four or more residues, with broad specificity. Also acts on dipeptidyl 2-naphthylamides.. The polypeptide is Dipeptidyl peptidase 3 (dpp3-1) (Dictyostelium discoideum (Social amoeba)).